The primary structure comprises 73 residues: RNA-binding protein Hfq (73 aa).

Residues 8-68 form the Sm domain; it reads DQFLNQIRKE…ISTFAPQKNV (61 aa).

Belongs to the Hfq family. In terms of assembly, homohexamer.

In terms of biological role, RNA chaperone that binds small regulatory RNA (sRNAs) and mRNAs to facilitate mRNA translational regulation in response to envelope stress, environmental stress and changes in metabolite concentrations. Also binds with high specificity to tRNAs. The polypeptide is RNA-binding protein Hfq (Bacillus subtilis (strain 168)).